Here is a 254-residue protein sequence, read N- to C-terminus: Guanylate kinase (254 aa).

Positions K64 to M243 constitute a Guanylate kinase-like domain. G71–G78 contributes to the ATP binding site.

It belongs to the guanylate kinase family.

It localises to the cytoplasm. The catalysed reaction is GMP + ATP = GDP + ADP. In terms of biological role, essential for recycling GMP and indirectly, cGMP. The chain is Guanylate kinase from Leifsonia xyli subsp. xyli (strain CTCB07).